We begin with the raw amino-acid sequence, 271 residues long: Probable short-chain type dehydrogenase/reductase VdlC (271 aa).

1 to 25 (MAVITGASSGIGLECVLMLLNQGYK) serves as a coordination point for NAD(+). S129 serves as a coordination point for substrate. The active-site Proton acceptor is Y142.

It belongs to the short-chain dehydrogenases/reductases (SDR) family.

This is Probable short-chain type dehydrogenase/reductase VdlC (vdlC) from Helicobacter pylori (strain J99 / ATCC 700824) (Campylobacter pylori J99).